Here is an 874-residue protein sequence, read N- to C-terminus: MTSERYNARDSEPRWQAAWDEKAIFVSKNDDSRPKYYVLEMFPYPSGRIHIGHVRNYTLGDVLARFMRAKGFNVLHPMGWDAFGLPAENAAIERKVAPKAWTYDNIAAMKKQLRSIGLSLDWSREIATCDPSYYKHQQKMFLDFLRAGLAEREKRKVNWDPVDMTVLANEQVIDGKGWRSGAIVEQREMNQWVFKITKYSQELLSALDTLDRWPDKVRLMQRNWIGRSEGLLVRFALDQATTPAGESELKIFTTRPDTLFGAKFMAISADHPLATAAAAKDPKLAEFIAEIKKIGTAQEIIDTAEKQGFDTGIRAIHPFDPSWKLPVYVANFVLMEYGTGAIFGCPAHDQRDLDFVNKYNLGNTPVVCPEGQDPKSFVITDTAYDGDGRMINSRFLDGMTIEQAKDEVAKRLESELRGNAPVGERQVNFRLRDWGISRQRYWGCPIPVIHCPTCDVVPVPDADLPVKLPDDATFDKPGNALDHHPTWKHVTCPQCGGKAQRETDTMDTFVDSSWYFARFTDPWNENAPTTPAVANRMLPIDQYIGGVEHAILHLLYSRFFTRAMKATGHVALDEPFAGMFTQGMVVHETYQKADGSYVQPAEVKIELGGNGRRATLLTTGEDIQIGAIEKMSKSKKNTVDPDDIIETYGADVARWFMLSDSPPDRDVIWSDERVQGASRFVQRLWRLVNDSVELGKAAPAARPASFGADATALRKAAHGALDKVTTEIERLHFNVCLAHIREFTNAFSEVLQRPGQPAADLAWAIREASQILVQLFSPMMPHLAEECWQVLGQKGLVSEANWPQIERDLLVEDSVTLVVQVNGKKRGEVTVATAAQNPEIEAAVLALDAVKLALDGKPVRKVIIVPKRIVNVVG.

A 'HIGH' region motif is present at residues 43-53 (PYPSGRIHIGH). A 'KMSKS' region motif is present at residues 630 to 634 (KMSKS). K633 serves as a coordination point for ATP.

This sequence belongs to the class-I aminoacyl-tRNA synthetase family.

Its subcellular location is the cytoplasm. The enzyme catalyses tRNA(Leu) + L-leucine + ATP = L-leucyl-tRNA(Leu) + AMP + diphosphate. This chain is Leucine--tRNA ligase, found in Bradyrhizobium diazoefficiens (strain JCM 10833 / BCRC 13528 / IAM 13628 / NBRC 14792 / USDA 110).